A 398-amino-acid polypeptide reads, in one-letter code: E3 ubiquitin-protein ligase MARCHF11 (398 aa).

A compositionally biased stretch (basic and acidic residues) spans methionine 1–serine 14. The interval methionine 1 to glutamine 158 is disordered. Residues proline 19–glycine 31 are compositionally biased toward pro residues. Basic and acidic residues-rich tracts occupy residues glutamate 94 to leucine 104 and alanine 121 to threonine 130. The segment at glutamine 158 to threonine 218 adopts an RING-CH-type zinc-finger fold. Cysteine 166, cysteine 169, cysteine 182, cysteine 184, histidine 192, cysteine 195, cysteine 208, and cysteine 211 together coordinate Zn(2+). 2 consecutive transmembrane segments (helical) span residues methionine 241 to serine 261 and isoleucine 274 to isoleucine 294. Residues tyrosine 367–leucine 370 carry the YXXL motif motif. The PDZ-binding signature appears at valine 395 to valine 398.

Interacts (YXXL motif) with AP1M1. Interacts (via PDZ-binding motif) with LIN7A. Interacts with unidentified fucose glycoproteins. As to expression, predominantly expressed in testis. Present in early developing spermatids. Not present in spermatogonia, spermatocytes or somatic cells (i.e. peritubular, Leydig, and Sertoli cells). Present in early round spermatids at step 4, remains until step 11, then it decreases at steps 12-15, and diminishes after step 16 (at protein level). Also expressed at lower level in brain.

It localises to the cytoplasmic vesicle membrane. It catalyses the reaction S-ubiquitinyl-[E2 ubiquitin-conjugating enzyme]-L-cysteine + [acceptor protein]-L-lysine = [E2 ubiquitin-conjugating enzyme]-L-cysteine + N(6)-ubiquitinyl-[acceptor protein]-L-lysine.. Its pathway is protein modification; protein ubiquitination. Functionally, E3 ubiquitin-protein ligase that mediates polyubiquitination of CD4. E3 ubiquitin ligases accept ubiquitin from an E2 ubiquitin-conjugating enzyme in the form of a thioester and then directly transfer the ubiquitin to targeted substrates. May play a role in ubuquitin-dependent protein sorting in developmenting spermatids. In Rattus norvegicus (Rat), this protein is E3 ubiquitin-protein ligase MARCHF11 (Marchf11).